We begin with the raw amino-acid sequence, 106 residues long: MRLLTLIFVALIALLQYPLWLGKGSWLRVWDLNQKIVAQKAVNAELKLRNDTLDAEVRDLKQGNAAIEERARSELGMIKQDEVFYQVIDQMPGQPASPPAALTGAQ.

The Cytoplasmic portion of the chain corresponds to 1–3 (MRL). Residues 4-21 (LTLIFVALIALLQYPLWL) form a helical membrane-spanning segment. At 22 to 106 (GKGSWLRVWD…SPPAALTGAQ (85 aa)) the chain is on the periplasmic side. Positions 31-73 (DLNQKIVAQKAVNAELKLRNDTLDAEVRDLKQGNAAIEERARS) form a coiled coil.

Belongs to the FtsB family. As to quaternary structure, part of a complex composed of FtsB, FtsL and FtsQ.

The protein resides in the cell inner membrane. Functionally, essential cell division protein. May link together the upstream cell division proteins, which are predominantly cytoplasmic, with the downstream cell division proteins, which are predominantly periplasmic. In Methylobacillus flagellatus (strain ATCC 51484 / DSM 6875 / VKM B-1610 / KT), this protein is Cell division protein FtsB.